The primary structure comprises 264 residues: MKIEAVIFDWAGTTVDYGCFAPLEVFMKIFQKRGVEITAEEARKPMGLLKIDHVRALTEMPRIADEWKRVFGQLPTEADIHEMYEEFEEILFSILPSYATPIDGVKEVIASLRERGIKIGSTTGYTREMMEIVAKEAALQGYKPDFLVTPDDVPAGRPYPWMCYKNAMELGVYPMNHMIKVGDTVSDMKEGRNAGMWTVGVILGSSELGLTQYEVESMDSVELREKIEIVRNRFAENGAHSTIETMQELENVMEHIEKQELIIS.

Residue Asp9 is the Nucleophile of the active site. Mg(2+) contacts are provided by Asp9 and Ala11. Catalysis depends on Lys50, which acts as the Schiff-base intermediate with substrate. Residue Asp183 participates in Mg(2+) binding.

It belongs to the HAD-like hydrolase superfamily. PhnX family. In terms of assembly, homodimer. It depends on Mg(2+) as a cofactor.

The enzyme catalyses phosphonoacetaldehyde + H2O = acetaldehyde + phosphate + H(+). Functionally, involved in phosphonate degradation. The chain is Phosphonoacetaldehyde hydrolase from Bacillus cereus (strain ATCC 14579 / DSM 31 / CCUG 7414 / JCM 2152 / NBRC 15305 / NCIMB 9373 / NCTC 2599 / NRRL B-3711).